The chain runs to 264 residues: General transcription factor IIF subunit 2 (264 aa).

The protein belongs to the TFIIF beta subunit family. Heterodimer of an alpha and a beta subunit.

The protein localises to the nucleus. Its function is as follows. TFIIF is a general transcription initiation factor that binds to RNA polymerase II and helps to recruit it to the initiation complex in collaboration with TFIIB. The polypeptide is General transcription factor IIF subunit 2 (gtf2f2) (Xenopus laevis (African clawed frog)).